A 508-amino-acid chain; its full sequence is Steroid 17-alpha-hydroxylase/17,20 lyase (508 aa).

Asn202 serves as a coordination point for substrate. Heme is bound at residue Cys442.

Belongs to the cytochrome P450 family. The cofactor is heme. In terms of processing, phosphorylation is necessary for 17,20-lyase, but not for 17-alpha-hydroxylase activity.

It localises to the endoplasmic reticulum membrane. Its subcellular location is the microsome membrane. It catalyses the reaction a C21-steroid + reduced [NADPH--hemoprotein reductase] + O2 = a 17alpha-hydroxy-C21-steroid + oxidized [NADPH--hemoprotein reductase] + H2O + H(+). The catalysed reaction is progesterone + reduced [NADPH--hemoprotein reductase] + O2 = 17alpha-hydroxyprogesterone + oxidized [NADPH--hemoprotein reductase] + H2O + H(+). It carries out the reaction pregnenolone + reduced [NADPH--hemoprotein reductase] + O2 = 17alpha-hydroxypregnenolone + oxidized [NADPH--hemoprotein reductase] + H2O + H(+). The enzyme catalyses 17alpha-hydroxyprogesterone + reduced [NADPH--hemoprotein reductase] + O2 = androst-4-ene-3,17-dione + acetate + oxidized [NADPH--hemoprotein reductase] + H2O + 2 H(+). It catalyses the reaction 17alpha-hydroxyprogesterone + reduced [NADPH--hemoprotein reductase] + O2 = 16alpha,17alpha-dihydroxyprogesterone + oxidized [NADPH--hemoprotein reductase] + H2O + H(+). The catalysed reaction is 16alpha,17alpha-dihydroxyprogesterone + reduced [NADPH--hemoprotein reductase] + O2 = 6beta,16alpha,17alpha-trihydroxyprogesterone + oxidized [NADPH--hemoprotein reductase] + H2O + H(+). It carries out the reaction 17alpha-hydroxypregnenolone + reduced [NADPH--hemoprotein reductase] + O2 = 3beta-hydroxyandrost-5-en-17-one + acetate + oxidized [NADPH--hemoprotein reductase] + H2O + 2 H(+). The enzyme catalyses 16alpha,17alpha-dihydroxypregnenolone + reduced [NADPH--hemoprotein reductase] + O2 = 3beta,16alpha-dihydroxy-androst-5-en-17-one + acetate + oxidized [NADPH--hemoprotein reductase] + H2O + 2 H(+). It catalyses the reaction 3beta-hydroxyandrost-5-en-17-one + reduced [NADPH--hemoprotein reductase] + O2 = 3beta,16alpha-dihydroxy-androst-5-en-17-one + oxidized [NADPH--hemoprotein reductase] + H2O + H(+). The catalysed reaction is androst-4-ene-3,17-dione + reduced [NADPH--hemoprotein reductase] + O2 = 16alpha-hydroxyandrost-4-ene-3,17-dione + oxidized [NADPH--hemoprotein reductase] + H2O + H(+). The protein operates within steroid hormone biosynthesis. It participates in steroid biosynthesis; glucocorticoid biosynthesis. With respect to regulation, regulated predominantly by intracellular cAMP levels. The 17,20-lyase activity is stimulated by cytochrome b5, which acts as an allosteric effector increasing the Vmax of the lyase activity. Its function is as follows. A cytochrome P450 monooxygenase involved in corticoid and androgen biosynthesis. Catalyzes 17-alpha hydroxylation of C21 steroids, which is common for both pathways. A second oxidative step, required only for androgen synthesis, involves an acyl-carbon cleavage. The 17-alpha hydroxy intermediates, as part of adrenal glucocorticoids biosynthesis pathway, are precursors of cortisol. Hydroxylates steroid hormones, pregnenolone and progesterone to form 17-alpha hydroxy metabolites, followed by the cleavage of the C17-C20 bond to form C19 steroids, dehydroepiandrosterone (DHEA) and androstenedione. Has 16-alpha hydroxylase activity. Catalyzes 16-alpha hydroxylation of 17-alpha hydroxy pregnenolone, followed by the cleavage of the C17-C20 bond to form 16-alpha-hydroxy DHEA. Also 16-alpha hydroxylates androgens, relevant for estriol synthesis. Mechanistically, uses molecular oxygen inserting one oxygen atom into a substrate, and reducing the second into a water molecule, with two electrons provided by NADPH via cytochrome P450 reductase (CPR; NADPH-ferrihemoprotein reductase). This chain is Steroid 17-alpha-hydroxylase/17,20 lyase, found in Homo sapiens (Human).